We begin with the raw amino-acid sequence, 348 residues long: UPF0283 membrane protein PBPRA2435 (348 aa).

The next 3 helical transmembrane spans lie at 71 to 91 (GLLIAGAAMTGWQTVDYVVSA), 97 to 117 (WLALGWSVIVAGIATMGITAL), and 211 to 231 (EAAVMVAMSPLAVADMLLVAW).

The protein belongs to the UPF0283 family.

It localises to the cell inner membrane. The protein is UPF0283 membrane protein PBPRA2435 of Photobacterium profundum (strain SS9).